The following is a 723-amino-acid chain: Fatty acid oxidation complex subunit alpha (723 aa).

Residues Met1 to Asp189 are enoyl-CoA hydratase/isomerase. Position 296 (Asp296) interacts with substrate. Residues Asn311–Ile723 form a 3-hydroxyacyl-CoA dehydrogenase region. Residues Met325, Asp344, Val401–Glu403, Lys408, and Ser430 each bind NAD(+). His451 (for 3-hydroxyacyl-CoA dehydrogenase activity) is an active-site residue. Asn454 provides a ligand contact to NAD(+). Residues Asn501 and Tyr661 each contribute to the substrate site.

In the N-terminal section; belongs to the enoyl-CoA hydratase/isomerase family. The protein in the C-terminal section; belongs to the 3-hydroxyacyl-CoA dehydrogenase family. As to quaternary structure, heterotetramer of two alpha chains (FadB) and two beta chains (FadA).

The catalysed reaction is a (3S)-3-hydroxyacyl-CoA + NAD(+) = a 3-oxoacyl-CoA + NADH + H(+). It carries out the reaction a (3S)-3-hydroxyacyl-CoA = a (2E)-enoyl-CoA + H2O. The enzyme catalyses a 4-saturated-(3S)-3-hydroxyacyl-CoA = a (3E)-enoyl-CoA + H2O. It catalyses the reaction (3S)-3-hydroxybutanoyl-CoA = (3R)-3-hydroxybutanoyl-CoA. The catalysed reaction is a (3Z)-enoyl-CoA = a 4-saturated (2E)-enoyl-CoA. It carries out the reaction a (3E)-enoyl-CoA = a 4-saturated (2E)-enoyl-CoA. It participates in lipid metabolism; fatty acid beta-oxidation. In terms of biological role, involved in the aerobic and anaerobic degradation of long-chain fatty acids via beta-oxidation cycle. Catalyzes the formation of 3-oxoacyl-CoA from enoyl-CoA via L-3-hydroxyacyl-CoA. It can also use D-3-hydroxyacyl-CoA and cis-3-enoyl-CoA as substrate. The protein is Fatty acid oxidation complex subunit alpha of Vibrio vulnificus (strain CMCP6).